A 327-amino-acid polypeptide reads, in one-letter code: Mitochondrial carnitine carrier (327 aa).

The segment covering 1–11 (MSSDTSLSESS) has biased composition (low complexity). The disordered stretch occupies residues 1–29 (MSSDTSLSESSLLKEESGSLTKSRPPIKS). 6 helical membrane-spanning segments follow: residues 33-49 (RENI…GVCA), 107-123 (LGVT…YDVG), 141-162 (MGQM…TAPT), 196-212 (GSLA…ALYF), 244-260 (LAGG…VFPI), and 293-313 (FFPG…ATFL). Solcar repeat units follow at residues 33–126 (RENI…GKKL), 139–221 (LTMG…SKNY), and 237–321 (VNIL…THSL).

Belongs to the mitochondrial carrier (TC 2.A.29) family.

The protein localises to the mitochondrion inner membrane. Functionally, transports carnitine, acetylcarnitine, propionylcarnitine and to a much lower extent medium- and long-chain acylcarnitines. The protein is Mitochondrial carnitine carrier (CRC1) of Saccharomyces cerevisiae (strain ATCC 204508 / S288c) (Baker's yeast).